The primary structure comprises 192 residues: Putative ripening-related protein 2 (192 aa).

The signal sequence occupies residues M1–G26.

Belongs to the kiwellin family.

It is found in the secreted. This chain is Putative ripening-related protein 2, found in Oryza sativa subsp. japonica (Rice).